Here is a 291-residue protein sequence, read N- to C-terminus: MAKLSPRDIKRKIQGIKNTKRITNAMKVVSAAKLRKAQELVYASRPYSEKLYELVGHLAAHVDTEDNPLFDVREERNVDVILVTADRGLAGAFNSNVIRTAENLIREKEEKGVKVSLILVGRKGFQYFTKRGYNVIKGYDEVFRKTVNFNVAKEVAEIVKERFLNGETDRVYLINNEMVTRASYKPQVRVFLPFEAQEKEVEELGTYEFEVSEEEFFDYIVNLYLNYQVYRAMVESNAAEHFARMIAMDNATKNAEDLIRQWTLVFNKARQEAITTELIDITNAVEALKAQ.

The protein belongs to the ATPase gamma chain family. As to quaternary structure, F-type ATPases have 2 components, CF(1) - the catalytic core - and CF(0) - the membrane proton channel. CF(1) has five subunits: alpha(3), beta(3), gamma(1), delta(1), epsilon(1). CF(0) has three main subunits: a, b and c.

The protein resides in the cell inner membrane. Produces ATP from ADP in the presence of a proton gradient across the membrane. The gamma chain is believed to be important in regulating ATPase activity and the flow of protons through the CF(0) complex. In Aquifex aeolicus (strain VF5), this protein is ATP synthase gamma chain.